A 500-amino-acid polypeptide reads, in one-letter code: Putative antiporter subunit mnhD2 (500 aa).

14 helical membrane-spanning segments follow: residues 2–22 (MSNLIILPMLLPFVCALILVF), 32–52 (ILSITTMIVNTMISIALLIYV), 78–98 (LSLLMVSVSSFVVTLIMAYGF), 108–128 (FHLPTFILLLTVGVIGSFLTS), 130–150 (LFNLYVMFEIMLLASFVLVTL), 161–181 (IVYVVLNILGSWLLLLGIGML), 209–229 (ISLVFLVAFSSKAALVIFMWL), 240–260 (LAALFAALMTKVGAYALIRFF), 273–293 (TLLVFMACITMIIGAFGVIAY), 308–328 (IGFIILGLGSHTISGVNGAIF), 330–350 (LANDIIVKTLLFFVIGSLVYM), 368–388 (FFGVAFVVVIFAIGGVPPFSG), 403–423 (GNYIGLALMIVTSLIAMYSLF), and 450–470 (GLLSVLVVVVLAMGIAAPVVL).

It belongs to the CPA3 antiporters (TC 2.A.63) subunit D family. As to quaternary structure, may form a heterooligomeric complex that consists of seven subunits: mnhA2, mnhB2, mnhC2, mnhD2, mnhE2, mnhF2 and mnhG2.

The protein localises to the cell membrane. The chain is Putative antiporter subunit mnhD2 (mnhD2) from Staphylococcus epidermidis (strain ATCC 12228 / FDA PCI 1200).